The sequence spans 428 residues: Trigger factor (428 aa).

The PPIase FKBP-type domain occupies 163 to 248; it reads GDTAVIDFEG…VHEIKEKRLP (86 aa).

The protein belongs to the FKBP-type PPIase family. Tig subfamily.

It localises to the cytoplasm. It carries out the reaction [protein]-peptidylproline (omega=180) = [protein]-peptidylproline (omega=0). In terms of biological role, involved in protein export. Acts as a chaperone by maintaining the newly synthesized protein in an open conformation. Functions as a peptidyl-prolyl cis-trans isomerase. The polypeptide is Trigger factor (Geobacillus sp. (strain WCH70)).